The primary structure comprises 426 residues: Probable imidazolonepropionase (426 aa).

Tyr-159 and His-192 together coordinate 4-imidazolone-5-propanoate. Tyr-159 serves as a coordination point for N-formimidoyl-L-glutamate. Residue His-260 coordinates Fe(3+). A Zn(2+)-binding site is contributed by His-260. Glu-263 contacts 4-imidazolone-5-propanoate. Fe(3+) is bound at residue Asp-334. Asp-334 is a binding site for Zn(2+). Asn-336 lines the N-formimidoyl-L-glutamate pocket.

Belongs to the metallo-dependent hydrolases superfamily. HutI family. Requires Zn(2+) as cofactor. Fe(3+) is required as a cofactor.

The enzyme catalyses 4-imidazolone-5-propanoate + H2O = N-formimidoyl-L-glutamate. It functions in the pathway amino-acid degradation; L-histidine degradation into L-glutamate; N-formimidoyl-L-glutamate from L-histidine: step 3/3. This chain is Probable imidazolonepropionase (Amdhd1), found in Mus musculus (Mouse).